Reading from the N-terminus, the 961-residue chain is RNA polymerase II subunit A C-terminal domain phosphatase (961 aa).

Met-1 carries the N-acetylmethionine modification. An FCP1 homology domain is found at His-178–Val-344. Positions Asp-328–His-589 are disordered. The span at Asp-394 to Ile-406 shows a compositional bias: basic and acidic residues. Ser-395 bears the Phosphoserine mark. Over residues Leu-450–Ser-462 the composition is skewed to acidic residues. A compositionally biased stretch (low complexity) spans Glu-463–Asp-475. The segment covering Ser-575–Asp-588 has biased composition (acidic residues). The 100-residue stretch at Leu-629 to Leu-728 folds into the BRCT domain. Ser-674 and Ser-740 each carry phosphoserine. 2 disordered regions span residues Asp-730–Pro-752 and Lys-780–Met-949. Lys-780 carries the post-translational modification N6-acetyllysine. The segment covering Ser-793–Ser-803 has biased composition (polar residues). Phosphoserine is present on Ser-839. Residues Cys-850 to Lys-859 are compositionally biased toward basic and acidic residues. 2 stretches are compositionally biased toward acidic residues: residues Glu-860–Asp-873 and Asn-937–Asp-947. Ser-869 and Ser-872 each carry phosphoserine.

In terms of assembly, homodimer. Interacts with GTF2F1. Interacts with WDR77, SNRPB and SNRNP70. Post-translationally, phosphorylated. In the presence of TFIIF, the phosphorylated form has an increased CTD phosphatase activity. The phosphorylation is required for the physical interaction with GTF2F1. Ubiquitously expressed.

It localises to the nucleus. Its subcellular location is the cytoplasm. The protein resides in the cytoskeleton. The protein localises to the microtubule organizing center. It is found in the centrosome. It localises to the spindle pole. Its subcellular location is the midbody. It carries out the reaction O-phospho-L-seryl-[protein] + H2O = L-seryl-[protein] + phosphate. The catalysed reaction is O-phospho-L-threonyl-[protein] + H2O = L-threonyl-[protein] + phosphate. Its function is as follows. Processively dephosphorylates 'Ser-2' and 'Ser-5' of the heptad repeats YSPTSPS in the C-terminal domain of the largest RNA polymerase II subunit. This promotes the activity of RNA polymerase II. Plays a role in the exit from mitosis by dephosphorylating crucial mitotic substrates (USP44, CDC20 and WEE1) that are required for M-phase-promoting factor (MPF)/CDK1 inactivation. The protein is RNA polymerase II subunit A C-terminal domain phosphatase (CTDP1) of Homo sapiens (Human).